The primary structure comprises 604 residues: Ectonucleoside triphosphate diphosphohydrolase 7 (604 aa).

The Cytoplasmic segment spans residues 1–28 (MARISFSYLCPASWYFTVPTVSPFLRQR). The helical transmembrane segment at 29 to 49 (VAFLGLFFISCLLLLMLIIDF) threads the bilayer. Topologically, residues 50 to 546 (RHWSASLPRD…QAHGSWFRLS (497 aa)) are vesicular. The active-site Proton acceptor is Glu-217. N-linked (GlcNAc...) asparagine glycosylation is present at Asn-330. A disulfide bridge connects residues Cys-448 and Cys-477. Residues 547-567 (FVYNHYLFFACILVVLLAIFL) form a helical membrane-spanning segment. The Cytoplasmic segment spans residues 568-604 (YLLRLRRIHHRQTRASAPLDLLWLEEVVPMMGVQVGP).

Belongs to the GDA1/CD39 NTPase family. Requires Ca(2+) as cofactor. The cofactor is Mg(2+).

It is found in the cytoplasmic vesicle membrane. It carries out the reaction a ribonucleoside 5'-triphosphate + H2O = a ribonucleoside 5'-diphosphate + phosphate + H(+). The catalysed reaction is UTP + H2O = UDP + phosphate + H(+). The enzyme catalyses GTP + H2O = GDP + phosphate + H(+). It catalyses the reaction CTP + H2O = CDP + phosphate + H(+). Functionally, catalyzes the hydrolysis of nucleoside triphosphates and diphosphates in a calcium- or magnesium-dependent manner. Preferentially hydrolyzes nucleoside 5'-triphosphates, with substrate preference for UTP &gt; GTP &gt; CTP. Hydrolyzes ATP and nucleoside diphosphates only to a minor extent. This is Ectonucleoside triphosphate diphosphohydrolase 7 (ENTPD7) from Homo sapiens (Human).